A 209-amino-acid chain; its full sequence is NDR1/HIN1-like protein 1 (209 aa).

Residues 18-38 (IFWSIIFVLFIIFLTILLIWA) form a helical membrane-spanning segment. A glycan (N-linked (GlcNAc...) asparagine) is linked at N58.

As to expression, expressed in rosette leaves, cauline leaves, stems, and siliques, and at lower levels in roots and flowers.

The protein localises to the cell membrane. Its function is as follows. May play a role in plant immunity. This chain is NDR1/HIN1-like protein 1, found in Arabidopsis thaliana (Mouse-ear cress).